A 380-amino-acid chain; its full sequence is N-acetylaspartylglutamate synthase A (380 aa).

The ATP-grasp domain maps to 115-300 (FQELAGHGVP…VGAIIADYAM (186 aa)). ATP is bound by residues Lys154, 189–199 (QKYVKESHGKD), and Arg215. Mg(2+)-binding residues include Asp260, Glu273, and Asn275. 3 residues coordinate Mn(2+): Asp260, Glu273, and Asn275. A Phosphoserine modification is found at Ser319. A disordered region spans residues 345–370 (GSTSSESEPELGEARDSSVKTMGAPP).

Belongs to the RimK family. The cofactor is Mg(2+). Mn(2+) serves as cofactor. As to expression, highly expressed in spinal cord and brain.

Its subcellular location is the cytoplasm. The enzyme catalyses N-acetyl-L-aspartate + L-glutamate + ATP = N-acetyl-L-aspartyl-L-glutamate + ADP + phosphate + H(+). It carries out the reaction N-acetyl-L-aspartate + 2 L-glutamate + 2 ATP = N-acetyl-L-aspartyl-L-glutamyl-L-glutamate + 2 ADP + 2 phosphate + 2 H(+). Catalyzes the synthesis of N-acetyl-L-aspartyl-L-glutamate (NAAG) and N-acetyl-L-aspartyl-L-glutamyl-L-glutamate. The protein is N-acetylaspartylglutamate synthase A (Rimkla) of Mus musculus (Mouse).